We begin with the raw amino-acid sequence, 363 residues long: S-methylmethionine--homocysteine S-methyltransferase BHMT2 (363 aa).

The region spanning 11-305 (RGILERLESG…YHIRAIAEEL (295 aa)) is the Hcy-binding domain. Residues Cys-208, Cys-290, and Cys-291 each coordinate Zn(2+). Ser-321 carries the phosphoserine modification.

Homotetramer. It depends on Zn(2+) as a cofactor.

The enzyme catalyses S-methyl-L-methionine + L-homocysteine = 2 L-methionine + H(+). The protein operates within amino-acid biosynthesis; L-methionine biosynthesis via de novo pathway; L-methionine from L-homocysteine (BhmT route): step 1/1. Its function is as follows. Involved in the regulation of homocysteine metabolism. Converts betaine and homocysteine to dimethylglycine and methionine, respectively. This reaction is also required for the irreversible oxidation of choline. This chain is S-methylmethionine--homocysteine S-methyltransferase BHMT2 (BHMT2), found in Pongo abelii (Sumatran orangutan).